Consider the following 201-residue polypeptide: Aminoglycoside N(6')-acetyltransferase type 1 (201 aa).

In terms of domain architecture, N-acetyltransferase spans 25-192 (VTLRLMTEHD…PAVYMVQTRQ (168 aa)). The substrate site is built by Trp-51 and Asp-154. Acetyl-CoA is bound at residue Asn-159.

Homodimer.

It catalyses the reaction kanamycin B + acetyl-CoA = N(6')-acetylkanamycin B + CoA + H(+). In terms of biological role, catalyzes the transfer of an acetyl group from acetyl-CoA to the 6'-amino group of aminoglycoside molecules conferring resistance to antibiotics containing the purpurosamine ring including amikacin and kanamycin. The polypeptide is Aminoglycoside N(6')-acetyltransferase type 1 (aacA4) (Serratia marcescens).